The primary structure comprises 367 residues: Putative F-box protein At4g10190 (367 aa).

The 51-residue stretch at 3–53 (KRNIVDLPEDLVMEILARVPTVTLVRLQSTSKRWNVLIEDKRFAEQHFTNA) folds into the F-box domain.

The chain is Putative F-box protein At4g10190 from Arabidopsis thaliana (Mouse-ear cress).